The sequence spans 421 residues: ATP-dependent RNA helicase RhlB (421 aa).

Positions 9–37 match the Q motif motif; that stretch reads QKFSDFALHPKVVEALEKKGFHNCTPIQA. A Helicase ATP-binding domain is found at 40-219; that stretch reads LPLTLAGRDV…FEQMNNAEYI (180 aa). ATP is bound at residue 53-60; the sequence is AQTGTGKT. The DEAD box motif lies at 165–168; that stretch reads DEAD. A Helicase C-terminal domain is found at 245–390; sequence RLLQTLIEEE…VSKYNPDALM (146 aa). Residues 392–421 form a disordered region; that stretch reads DLPKPLRLTRPRTGNGPRRTGTPRNRRRSG. The span at 402-414 shows a compositional bias: low complexity; sequence PRTGNGPRRTGTP.

The protein belongs to the DEAD box helicase family. RhlB subfamily. In terms of assembly, component of the RNA degradosome, which is a multiprotein complex involved in RNA processing and mRNA degradation.

It localises to the cytoplasm. It catalyses the reaction ATP + H2O = ADP + phosphate + H(+). Its function is as follows. DEAD-box RNA helicase involved in RNA degradation. Has RNA-dependent ATPase activity and unwinds double-stranded RNA. This Escherichia coli O7:K1 (strain IAI39 / ExPEC) protein is ATP-dependent RNA helicase RhlB.